The chain runs to 1537 residues: Histone-lysine N-methyltransferase, H3 lysine-79 specific (1537 aa).

The region spanning 16–330 is the DOT1 domain; it reads EPAVYPWPLP…ILENYFSSLK (315 aa). S-adenosyl-L-methionine is bound by residues 136 to 139, 159 to 168, glutamate 186, and 222 to 223; these read YGET, FVDLGSGVGQ, and DF. A Phosphoserine modification is found at serine 297. A compositionally biased stretch (basic and acidic residues) spans 334–350; sequence LREEQEAARRRQQRESK. The interval 334–467 is disordered; sequence LREEQEAARR…SPFYQLPPSV (134 aa). At serine 374 the chain carries Phosphoserine. Positions 391-416 are required for interaction with nucleosomes and DNA; it reads PSKARKKKLNKKGRKMAGRKRGRPKK. Over residues 393–416 the composition is skewed to basic residues; the sequence is KARKKKLNKKGRKMAGRKRGRPKK. The segment covering 439-450 has biased composition (polar residues); that stretch reads QTVSQTAASSPQ. 2 positions are modified to phosphoserine: serine 448 and serine 471. Phosphothreonine is present on threonine 480. 2 positions are modified to phosphoserine: serine 775 and serine 786. Disordered stretches follow at residues 785–853, 893–912, 957–1128, and 1145–1243; these read LSQD…LRER, RAER…DPSS, TPGA…LNLN, and SPET…KWKS. Residues 800-809 are compositionally biased toward basic and acidic residues; sequence LHSRAEHTKE. Position 826 is a phosphoserine (serine 826). Serine 834 carries the post-translational modification Phosphoserine; by MAPK11. Residues 844–853 are compositionally biased toward basic and acidic residues; sequence KSSEKGLRER. Polar residues-rich tracts occupy residues 899–912, 966–986, and 994–1010; these read STPS…DPSS, DESS…STPQ, and PRNS…SSSP. The residue at position 900 (threonine 900) is a Phosphothreonine; by MAPK11. Serine 902 carries the post-translational modification Phosphoserine; by MAPK11. Phosphothreonine; by MAPK11 is present on threonine 984. Residue serine 997 is modified to Phosphoserine. A phosphoserine; by MAPK11 mark is found at serine 1001 and serine 1009. Phosphoserine is present on serine 1035. Positions 1048–1068 are enriched in polar residues; sequence TITTGAGSAKQSPSSKHSPLT. Phosphoserine is present on serine 1093. A Phosphoserine; by MAPK11 modification is found at serine 1104. Over residues 1118-1128 the composition is skewed to polar residues; that stretch reads TQPSGSPLNLN. The segment covering 1158-1171 has biased composition (basic and acidic residues); the sequence is QDHDQPPVLKKERP. Polar residues predominate over residues 1172-1184; the sequence is LSQTNGAHYSPLT. Residues 1185-1195 are compositionally biased toward acidic residues; sequence SDEEPGSEDEP. Phosphoserine occurs at positions 1213 and 1246. The segment at 1334-1410 is disordered; the sequence is GASLPHKGPE…DKTPLLSGKA (77 aa).

The protein belongs to the class I-like SAM-binding methyltransferase superfamily. DOT1 family. In terms of assembly, interacts with MLLT10.

Its subcellular location is the nucleus. The catalysed reaction is L-lysyl(79)-[histone H3] + 3 S-adenosyl-L-methionine = N(6),N(6),N(6)-trimethyl-L-lysyl(79)-[histone H3] + 3 S-adenosyl-L-homocysteine + 3 H(+). Histone methyltransferase. Methylates 'Lys-79' of histone H3. Nucleosomes are preferred as substrate compared to free histones. Binds to DNA. The sequence is that of Histone-lysine N-methyltransferase, H3 lysine-79 specific from Homo sapiens (Human).